The primary structure comprises 258 residues: Heat-labile enterotoxin A chain (258 aa).

A signal peptide spans 1–18 (MKNITFIFFILLASPLYA). 25-39 (RADSRPPDEIKRSGG) is a binding site for NAD(+). Glu-130 is an active-site residue. Residues Cys-205 and Cys-217 are joined by a disulfide bond.

It belongs to the enterotoxin A family. As to quaternary structure, heterohexamer of one A chain and of five B chains.

In terms of biological role, the biological activity of the toxin is produced by the A chain, which activates intracellular adenyl cyclase. The protein is Heat-labile enterotoxin A chain (eltA) of Escherichia coli.